We begin with the raw amino-acid sequence, 458 residues long: GTPase Der (458 aa).

EngA-type G domains follow at residues 4–169 (PSIA…PKDF) and 178–353 (VMMS…TQHR). GTP is bound by residues 10-17 (GRPNVGKS), 57-61 (DTGGL), 120-123 (NKCE), 184-191 (GRPNVGKS), 231-235 (DTAGI), and 296-299 (NKWD). The region spanning 354–439 (MRVTTSVVNE…PIILLWRGKQ (86 aa)) is the KH-like domain.

Belongs to the TRAFAC class TrmE-Era-EngA-EngB-Septin-like GTPase superfamily. EngA (Der) GTPase family. In terms of assembly, associates with the 50S ribosomal subunit.

In terms of biological role, GTPase that plays an essential role in the late steps of ribosome biogenesis. This is GTPase Der from Prochlorococcus marinus (strain MIT 9515).